Here is a 466-residue protein sequence, read N- to C-terminus: ATP synthase subunit beta (466 aa).

155-162 (GGAGVGKT) provides a ligand contact to ATP.

This sequence belongs to the ATPase alpha/beta chains family. F-type ATPases have 2 components, CF(1) - the catalytic core - and CF(0) - the membrane proton channel. CF(1) has five subunits: alpha(3), beta(3), gamma(1), delta(1), epsilon(1). CF(0) has three main subunits: a(1), b(2) and c(9-12). The alpha and beta chains form an alternating ring which encloses part of the gamma chain. CF(1) is attached to CF(0) by a central stalk formed by the gamma and epsilon chains, while a peripheral stalk is formed by the delta and b chains.

The protein localises to the cell inner membrane. The catalysed reaction is ATP + H2O + 4 H(+)(in) = ADP + phosphate + 5 H(+)(out). Its function is as follows. Produces ATP from ADP in the presence of a proton gradient across the membrane. The catalytic sites are hosted primarily by the beta subunits. The polypeptide is ATP synthase subunit beta (Bordetella pertussis (strain Tohama I / ATCC BAA-589 / NCTC 13251)).